Reading from the N-terminus, the 267-residue chain is Large ribosomal subunit protein uL4 (267 aa).

It belongs to the universal ribosomal protein uL4 family. In terms of assembly, part of the 50S ribosomal subunit.

Its function is as follows. One of the primary rRNA binding proteins, this protein initially binds near the 5'-end of the 23S rRNA. It is important during the early stages of 50S assembly. It makes multiple contacts with different domains of the 23S rRNA in the assembled 50S subunit and ribosome. Forms part of the polypeptide exit tunnel. This Saccharolobus solfataricus (strain ATCC 35092 / DSM 1617 / JCM 11322 / P2) (Sulfolobus solfataricus) protein is Large ribosomal subunit protein uL4.